Consider the following 137-residue polypeptide: Basic phospholipase A2 PeBP(R)-I/II (137 aa).

Residues Met1–Gly16 form the signal peptide. Disulfide bonds link Cys42–Cys131, Cys44–Cys60, Cys59–Cys111, Cys65–Cys137, Cys66–Cys104, Cys73–Cys97, and Cys91–Cys102. His63 is an active-site residue. The active site involves Asp105.

This sequence belongs to the phospholipase A2 family. Group II subfamily. R49 sub-subfamily. As to expression, expressed by the venom gland.

Its subcellular location is the secreted. It carries out the reaction a 1,2-diacyl-sn-glycero-3-phosphocholine + H2O = a 1-acyl-sn-glycero-3-phosphocholine + a fatty acid + H(+). Functionally, snake venom phospholipases A2 that have myotoxic, and edema-inducing activity, as well as extremely weak lipolytic activity. PLA2 catalyzes the calcium-dependent hydrolysis of the 2-acyl groups in 3-sn-phosphoglycerides. This is Basic phospholipase A2 PeBP(R)-I/II from Protobothrops elegans (Elegant pitviper).